Reading from the N-terminus, the 460-residue chain is tRNA modification GTPase MnmE (460 aa).

3 residues coordinate (6S)-5-formyl-5,6,7,8-tetrahydrofolate: Arg-23, Glu-86, and Arg-126. Positions 222-381 (GLSTAIIGRP…LEAAIASLFF (160 aa)) constitute a TrmE-type G domain. Residue Asn-232 participates in K(+) binding. GTP-binding positions include 232–237 (NVGKSS), 251–257 (TDIAGTT), and 276–279 (DTAG). Ser-236 is a Mg(2+) binding site. The K(+) site is built by Thr-251, Ile-253, and Thr-256. Mg(2+) is bound at residue Thr-257. Lys-460 is a (6S)-5-formyl-5,6,7,8-tetrahydrofolate binding site.

This sequence belongs to the TRAFAC class TrmE-Era-EngA-EngB-Septin-like GTPase superfamily. TrmE GTPase family. As to quaternary structure, homodimer. Heterotetramer of two MnmE and two MnmG subunits. Requires K(+) as cofactor.

Its subcellular location is the cytoplasm. Functionally, exhibits a very high intrinsic GTPase hydrolysis rate. Involved in the addition of a carboxymethylaminomethyl (cmnm) group at the wobble position (U34) of certain tRNAs, forming tRNA-cmnm(5)s(2)U34. The protein is tRNA modification GTPase MnmE of Exiguobacterium sibiricum (strain DSM 17290 / CCUG 55495 / CIP 109462 / JCM 13490 / 255-15).